Consider the following 100-residue polypeptide: Putative ESAT-6-like protein Y (100 aa).

The protein belongs to the WXG100 family.

This is Putative ESAT-6-like protein Y from Mycobacterium leprae (strain TN).